Here is a 44-residue protein sequence, read N- to C-terminus: Cytochrome b559 subunit beta (44 aa).

Residues 17-41 traverse the membrane as a helical segment; the sequence is VRWLAVHTLAVPSVFFVGAIAAMQF. Heme is bound by residues Arg18 and His23.

This sequence belongs to the PsbE/PsbF family. As to quaternary structure, heterodimer of an alpha subunit and a beta subunit. PSII is composed of 1 copy each of membrane proteins PsbA, PsbB, PsbC, PsbD, PsbE, PsbF, PsbH, PsbI, PsbJ, PsbK, PsbL, PsbM, PsbT, PsbX, PsbY, PsbZ, Psb30/Ycf12, peripheral proteins PsbO, CyanoQ (PsbQ), PsbU, PsbV and a large number of cofactors. It forms dimeric complexes. Heme b serves as cofactor.

The protein resides in the cellular thylakoid membrane. This b-type cytochrome is tightly associated with the reaction center of photosystem II (PSII). PSII is a light-driven water:plastoquinone oxidoreductase that uses light energy to abstract electrons from H(2)O, generating O(2) and a proton gradient subsequently used for ATP formation. It consists of a core antenna complex that captures photons, and an electron transfer chain that converts photonic excitation into a charge separation. This Synechocystis sp. (strain ATCC 27184 / PCC 6803 / Kazusa) protein is Cytochrome b559 subunit beta.